The sequence spans 335 residues: MQAAQLSWELENAVTLIDPQRDSLYRYDEETHKYLSDTRPWTKDPHYFKSVRISAVALLKMVMHARSGGSLEVMGLMQGYILPNTFVVTDAFRLPVEGTETRVNAQDEANEYMVSYLQSCREAGRMENAVGWYHSHPGYGCWLSGIDVSTQDMQQMSGPFVAVVIDPERTISAGKVDIGAFRTFPKDYTPPKEEQEEDEYQTVPLNKAEDFGAHASHYYSLEVSLFKSALDTEILSLLWNKYWVATLSQSPLFTTRDYGSKQMLDLSQKTRRVARGIESNPPRGGAPTQVRDQQLERVVKDGQRIVSEEVKGLLAAEVKMQLFQGIGGKQTVEST.

Residues 51 to 187 form the MPN domain; the sequence is VRISAVALLK…IGAFRTFPKD (137 aa). Residues H134, H136, and D147 each coordinate Zn(2+). The JAMM motif motif lies at 134–147; that stretch reads HSHPGYGCWLSGID.

This sequence belongs to the peptidase M67A family. CSN5 subfamily. In terms of assembly, component of the COP9 signalosome (CSN) complex.

Its subcellular location is the cytoplasm. It is found in the nucleus. In terms of biological role, catalytic component of the COP9 signalosome (CSN) complex that acts as an regulator of the ubiquitin (Ubl) conjugation pathway by mediating the deneddylation of the cullin subunit of SCF-type E3 ubiquitin-protein ligase complexes. The CSN complex seems to link protein degradation to sexual development. Required for fruit body formation. In Emericella nidulans (strain FGSC A4 / ATCC 38163 / CBS 112.46 / NRRL 194 / M139) (Aspergillus nidulans), this protein is COP9 signalosome complex subunit 5 (rri1).